Consider the following 775-residue polypeptide: Chloride channel protein CLC-a (775 aa).

The tract at residues 1–28 (MDEDGNLQISNSNYNGEEEGEDPENNTL) is disordered. 12 helical membrane passes run 88-108 (TLAC…NLAV), 131-151 (GLMV…VLVV), 178-198 (FGFT…AAGL), 206-226 (LVHI…DNHR), 248-268 (GSAS…LFAL), 278-298 (ALLW…RAFI), 328-348 (AADI…GSLY), 371-391 (VLLS…LPFL), 453-473 (MVSL…TFGI), 478-498 (GLFL…GTAM), 510-530 (AVLG…SLCV), and 531-551 (IFLE…VLLI). CBS domains lie at 595–658 (AKPP…FLNE) and 703–768 (TNTT…HLDK). A helical transmembrane segment spans residues 730–750 (HLLVVPKIQASGMSPVIGILT).

Belongs to the chloride channel (TC 2.A.49) family. As to quaternary structure, homodimer. Interacts with PP2A5. Broadly expressed in the plant.

It is found in the membrane. Voltage-gated chloride channel that could play a role in the regulation of nitrate content. This Arabidopsis thaliana (Mouse-ear cress) protein is Chloride channel protein CLC-a (CLC-A).